The primary structure comprises 159 residues: uncharacterized protein (159 aa).

A helical transmembrane segment spans residues 4-24; the sequence is QIALILSLIILIFFIYKFAMF.

Its subcellular location is the membrane. This is an uncharacterized protein from Acheta domesticus (House cricket).